The sequence spans 146 residues: Putative ankyrin repeat protein FPV224 (146 aa).

ANK repeat units follow at residues 9–38, 42–79, 94–126, and 127–145; these read SLST…DASI, KGIT…TRDI, YVFV…RIDE, and YYYS…KAVN.

This is Putative ankyrin repeat protein FPV224 from Fowlpox virus (strain NVSL) (FPV).